We begin with the raw amino-acid sequence, 446 residues long: Tubulin beta chain (446 aa).

GTP contacts are provided by Gln11, Glu69, Ser138, Gly142, Thr143, Gly144, Asn204, and Asn226. Glu69 serves as a coordination point for Mg(2+). A disordered region spans residues 427 to 446 (EAGVDEGEEFEEEEDFGDEQ). Acidic residues predominate over residues 429–446 (GVDEGEEFEEEEDFGDEQ).

Belongs to the tubulin family. As to quaternary structure, dimer of alpha and beta chains. A typical microtubule is a hollow water-filled tube with an outer diameter of 25 nm and an inner diameter of 15 nM. Alpha-beta heterodimers associate head-to-tail to form protofilaments running lengthwise along the microtubule wall with the beta-tubulin subunit facing the microtubule plus end conferring a structural polarity. Microtubules usually have 13 protofilaments but different protofilament numbers can be found in some organisms and specialized cells. Mg(2+) serves as cofactor.

The protein resides in the cytoplasm. Its subcellular location is the cytoskeleton. Functionally, tubulin is the major constituent of microtubules, a cylinder consisting of laterally associated linear protofilaments composed of alpha- and beta-tubulin heterodimers. Microtubules grow by the addition of GTP-tubulin dimers to the microtubule end, where a stabilizing cap forms. Below the cap, tubulin dimers are in GDP-bound state, owing to GTPase activity of alpha-tubulin. This is Tubulin beta chain from Giardia intestinalis (Giardia lamblia).